Here is a 583-residue protein sequence, read N- to C-terminus: Proteasome-associated ATPase (583 aa).

Polar residues predominate over residues 1–19; sequence METPNQDSGRTPTEQSAAN. The tract at residues 1 to 22 is disordered; that stretch reads METPNQDSGRTPTEQSAANDLS. Residues 24 to 75 are a coiled coil; it reads ADRQVNILRDKLRHIDRQLAAATQNNTKLVSMLETAKAEILRLKNALDQEGQ. 271–276 lines the ATP pocket; it reads GCGKTL. The interval 582-583 is docks into pockets in the proteasome alpha-ring; the sequence is YL.

This sequence belongs to the AAA ATPase family. Homohexamer. Assembles into a hexameric ring structure that caps the 20S proteasome core. Strongly interacts with the prokaryotic ubiquitin-like protein Pup through a hydrophobic interface; the interacting region of ARC lies in its N-terminal coiled-coil domain. There is one Pup binding site per ARC hexamer ring. Upon ATP-binding, the C-terminus of ARC interacts with the alpha-rings of the proteasome core, possibly by binding to the intersubunit pockets.

The protein operates within protein degradation; proteasomal Pup-dependent pathway. ATPase which is responsible for recognizing, binding, unfolding and translocation of pupylated proteins into the bacterial 20S proteasome core particle. May be essential for opening the gate of the 20S proteasome via an interaction with its C-terminus, thereby allowing substrate entry and access to the site of proteolysis. Thus, the C-termini of the proteasomal ATPase may function like a 'key in a lock' to induce gate opening and therefore regulate proteolysis. This chain is Proteasome-associated ATPase, found in Pseudarthrobacter chlorophenolicus (strain ATCC 700700 / DSM 12829 / CIP 107037 / JCM 12360 / KCTC 9906 / NCIMB 13794 / A6) (Arthrobacter chlorophenolicus).